Consider the following 290-residue polypeptide: Syntaxin-2 (290 aa).

The Cytoplasmic portion of the chain corresponds to 1–266 (MRDRLPDLTA…KYQSKARRKK (266 aa)). Position 14 is a phosphoserine (Ser-14). Residues 69-106 (EGKIKEELEDLNKEIKKTANRIRGKLKAIEQSCDQDEN) are a coiled coil. Residues 193 to 255 (LNEIESRHKD…EHAKEETKKA (63 aa)) enclose the t-SNARE coiled-coil homology domain. A helical; Anchor for type IV membrane protein transmembrane segment spans residues 267 to 290 (WIIAAVVVAVIAVLALIIGLTVGK).

It belongs to the syntaxin family. Interacts with SYT6 and SYT8; the interaction is Ca(2+)-dependent. In terms of tissue distribution, heart, spleen, liver, and testis.

It localises to the membrane. Its function is as follows. Essential for epithelial morphogenesis. May mediate Ca(2+)-regulation of exocytosis acrosomal reaction in sperm. This is Syntaxin-2 (Stx2) from Rattus norvegicus (Rat).